Here is a 406-residue protein sequence, read N- to C-terminus: Argininosuccinate synthase (406 aa).

Residues 13-21 (AYSGGLDTS) and Ala-40 each bind ATP. Positions 91 and 96 each coordinate L-citrulline. Gly-121 contacts ATP. L-aspartate is bound by residues Thr-123, Asn-127, and Asp-128. Asn-127 is an L-citrulline binding site. L-citrulline is bound by residues Arg-131, Ser-182, Ser-191, Glu-267, and Tyr-279.

This sequence belongs to the argininosuccinate synthase family. Type 1 subfamily. Homotetramer.

The protein resides in the cytoplasm. The catalysed reaction is L-citrulline + L-aspartate + ATP = 2-(N(omega)-L-arginino)succinate + AMP + diphosphate + H(+). Its pathway is amino-acid biosynthesis; L-arginine biosynthesis; L-arginine from L-ornithine and carbamoyl phosphate: step 2/3. The protein is Argininosuccinate synthase of Brucella anthropi (strain ATCC 49188 / DSM 6882 / CCUG 24695 / JCM 21032 / LMG 3331 / NBRC 15819 / NCTC 12168 / Alc 37) (Ochrobactrum anthropi).